Here is a 308-residue protein sequence, read N- to C-terminus: tRNA dimethylallyltransferase (308 aa).

14–21 (GPTASGKT) provides a ligand contact to ATP. 16–21 (TASGKT) is a substrate binding site. 3 interaction with substrate tRNA regions span residues 39 to 42 (DSAL), 163 to 167 (QRLSR), and 244 to 249 (RCVGYR).

The protein belongs to the IPP transferase family. Monomer. The cofactor is Mg(2+).

The catalysed reaction is adenosine(37) in tRNA + dimethylallyl diphosphate = N(6)-dimethylallyladenosine(37) in tRNA + diphosphate. Catalyzes the transfer of a dimethylallyl group onto the adenine at position 37 in tRNAs that read codons beginning with uridine, leading to the formation of N6-(dimethylallyl)adenosine (i(6)A). In Shewanella oneidensis (strain ATCC 700550 / JCM 31522 / CIP 106686 / LMG 19005 / NCIMB 14063 / MR-1), this protein is tRNA dimethylallyltransferase.